A 193-amino-acid polypeptide reads, in one-letter code: Dual-action ribosomal maturation protein DarP (193 aa).

Residues Met1–Glu10 are compositionally biased toward basic and acidic residues. Disordered stretches follow at residues Met1–Arg20 and Gln171–Glu193. The span at Gly181–Glu193 shows a compositional bias: acidic residues.

The protein belongs to the DarP family.

It is found in the cytoplasm. In terms of biological role, member of a network of 50S ribosomal subunit biogenesis factors which assembles along the 30S-50S interface, preventing incorrect 23S rRNA structures from forming. Promotes peptidyl transferase center (PTC) maturation. This chain is Dual-action ribosomal maturation protein DarP, found in Xanthomonas oryzae pv. oryzae (strain KACC10331 / KXO85).